Here is a 1269-residue protein sequence, read N- to C-terminus: Phospholipase D A (1269 aa).

The span at 55 to 64 (YTSVGSAPTT) shows a compositional bias: polar residues. The tract at residues 55 to 121 (YTSVGSAPTT…NNNLQSPTQS (67 aa)) is disordered. Composition is skewed to low complexity over residues 65-87 (NNNSNSNSNSNSSNRSLNNSGSS) and 95-114 (NSNKKVNNNNNNNNNNNNNN). The stretch at 131–192 (SKALHDFEEK…ELKSLDELLH (62 aa)) forms a coiled coil. Residues 222–232 (NSVTNNTPSSA) are compositionally biased toward polar residues. 2 disordered regions span residues 222-269 (NSVT…SSST) and 300-320 (NSYPNSIIPQGTPLDNPDPNL). Low complexity predominate over residues 233 to 269 (TPLTLSNNNNYTSSSLATSPTTNSSSSSSSSSSSSST). PLD phosphodiesterase domains are found at residues 435–462 (IYWSHHQKTLIIDQEIAFVGGVDFCFGR) and 704–731 (EQIYVHSKLMIVDDRTIIVGSANINDRS). Catalysis depends on residues histidine 440, lysine 442, aspartate 447, histidine 709, lysine 711, and aspartate 716. Positions 803–835 (NNNNNSNINNNINNNNNEINNNNNNNNNNNSNE) form a coiled coil. 3 stretches are compositionally biased toward low complexity: residues 810–850 (INNN…NSNS), 859–906 (NLPP…GTTN), and 934–943 (SSPQDSPQDS). Disordered regions lie at residues 810–966 (INNN…HQSP) and 983–1007 (SNEQLPPPPSSTTPPPPPPPLTTTD). The segment covering 987–1003 (LPPPPSSTTPPPPPPPL) has biased composition (pro residues). The stretch at 1059 to 1096 (TTAQQQQQQQQQQQQQQQQQQQQQQQQQQQQQQQQQQQ) forms a coiled coil. The segment at 1116 to 1167 (IKKKRSSISPSTSSNKLLLSGNGSGDSIRVVTDSGSSPRGQPRSMSSLHDHA) is disordered. The segment covering 1122-1142 (SISPSTSSNKLLLSGNGSGDS) has biased composition (low complexity). Positions 1148–1162 (DSGSSPRGQPRSMSS) are enriched in polar residues.

Belongs to the phospholipase D family.

The catalysed reaction is a 1,2-diacyl-sn-glycero-3-phosphocholine + H2O = a 1,2-diacyl-sn-glycero-3-phosphate + choline + H(+). Inhibited by butan-1-ol. Functionally, plays a role in cell growth. Hydrolyzes membrane phospholipids, such as PtdCho free headgroup and PtdOH (phosphatidic acid; signaling molecule on its own). Involved in the inhibition of actin-based motility and endocytosis. Its inhibition causes complete collapse of F-actin organization. In Dictyostelium discoideum (Social amoeba), this protein is Phospholipase D A (pldA).